The chain runs to 79 residues: UPF0349 protein BCE33L4669 (79 aa).

Belongs to the UPF0349 family.

In Bacillus cereus (strain ZK / E33L), this protein is UPF0349 protein BCE33L4669.